We begin with the raw amino-acid sequence, 338 residues long: CRISPR-associated endonuclease Cas1 (338 aa).

Mn(2+) contacts are provided by Glu165, His230, and Glu245.

It belongs to the CRISPR-associated endonuclease Cas1 family. As to quaternary structure, homodimer, forms a heterotetramer with a Cas2 homodimer. Requires Mg(2+) as cofactor. It depends on Mn(2+) as a cofactor.

Its function is as follows. CRISPR (clustered regularly interspaced short palindromic repeat), is an adaptive immune system that provides protection against mobile genetic elements (viruses, transposable elements and conjugative plasmids). CRISPR clusters contain spacers, sequences complementary to antecedent mobile elements, and target invading nucleic acids. CRISPR clusters are transcribed and processed into CRISPR RNA (crRNA). Acts as a dsDNA endonuclease. Involved in the integration of spacer DNA into the CRISPR cassette. The chain is CRISPR-associated endonuclease Cas1 from Fusobacterium nucleatum subsp. nucleatum (strain ATCC 25586 / DSM 15643 / BCRC 10681 / CIP 101130 / JCM 8532 / KCTC 2640 / LMG 13131 / VPI 4355).